The primary structure comprises 1232 residues: DNA-directed RNA polymerase subunit beta (1232 aa).

Residues 1170-1232 form a disordered region; that stretch reads SVDEDADELE…LDLDDFGDEH (63 aa). Acidic residues predominate over residues 1171–1180; that stretch reads VDEDADELEV. A compositionally biased stretch (basic and acidic residues) spans 1189-1198; that stretch reads PEEKEEKEKE. Positions 1199–1232 are enriched in acidic residues; sequence DSDEYDDLREEDVEPDLEELSLDDLDLDDFGDEH.

It belongs to the RNA polymerase beta chain family. In terms of assembly, the RNAP catalytic core consists of 2 alpha, 1 beta, 1 beta' and 1 omega subunit. When a sigma factor is associated with the core the holoenzyme is formed, which can initiate transcription.

It carries out the reaction RNA(n) + a ribonucleoside 5'-triphosphate = RNA(n+1) + diphosphate. Functionally, DNA-dependent RNA polymerase catalyzes the transcription of DNA into RNA using the four ribonucleoside triphosphates as substrates. The chain is DNA-directed RNA polymerase subunit beta from Clostridium botulinum (strain Okra / Type B1).